The primary structure comprises 228 residues: ATP-dependent dethiobiotin synthetase BioD (228 aa).

Residue Asp-12 to Tyr-17 participates in ATP binding. Thr-16 provides a ligand contact to Mg(2+). Lys-37 is a catalytic residue. Residues Asp-53, Glu-114–Gly-117, Asn-174–Asp-175, Pro-203–Ile-205, and Asn-210 each bind ATP. Positions 53 and 114 each coordinate Mg(2+).

Belongs to the dethiobiotin synthetase family. As to quaternary structure, homodimer. The cofactor is Mg(2+).

The protein localises to the cytoplasm. The enzyme catalyses (7R,8S)-7,8-diammoniononanoate + CO2 + ATP = (4R,5S)-dethiobiotin + ADP + phosphate + 3 H(+). It functions in the pathway cofactor biosynthesis; biotin biosynthesis; biotin from 7,8-diaminononanoate: step 1/2. Functionally, catalyzes a mechanistically unusual reaction, the ATP-dependent insertion of CO2 between the N7 and N8 nitrogen atoms of 7,8-diaminopelargonic acid (DAPA, also called 7,8-diammoniononanoate) to form a ureido ring. In Nitrosopumilus maritimus (strain SCM1), this protein is ATP-dependent dethiobiotin synthetase BioD.